The primary structure comprises 964 residues: Insulin receptor substrate 1 (964 aa).

The PH domain occupies 8-109 (GMALSGNLKK…WLDKLLVLQR (102 aa)). One can recognise an IRS-type PTB domain in the interval 122–236 (YDQVWQVVIQ…SAMSAKTESN (115 aa)). Residues 249–268 (LSHEPMRKRSSSANEASKPI) form a disordered region. Phosphoserine occurs at positions 286, 287, and 342. Tyr-410 carries the phosphotyrosine; by INSR modification. Residues 410-413 (YIPM) carry the YXXM motif 1 motif. Residues 527-560 (ASNRSQSSIGKEGSSYGSSANRQKKSTSAPLLSL) form a disordered region. Residues 528–560 (SNRSQSSIGKEGSSYGSSANRQKKSTSAPLLSL) are compositionally biased toward polar residues. Ser-554 is subject to Phosphoserine. The YXXM motif 2 signature appears at 640–643 (YLEM). Residues 698–712 (EKWREQPSRSEEKKS) are compositionally biased toward basic and acidic residues. The interval 698–735 (EKWREQPSRSEEKKSNSPLNDNPFSLKPTNVESKSKSH) is disordered. Over residues 713 to 729 (NSPLNDNPFSLKPTNVE) the composition is skewed to polar residues. Tyr-907 bears the Phosphotyrosine; by INSR mark. Residues 921–964 (AKYLKRGSRESPPVSACPEDGNTYARIDFDQSDSSSSSSNIFNT) are disordered. Phosphoserine occurs at positions 928 and 931. Tyr-944 is subject to Phosphotyrosine; by INSR. A compositionally biased stretch (low complexity) spans 952-964 (SDSSSSSSNIFNT).

In terms of assembly, bindings to phosphatidylinositol 3-kinase and SHP2.

Functionally, activates phosphatidylinositol 3-kinase when bound to the regulatory p85 subunit. May mediate the control of various cellular processes by insulin-like peptides. When phosphorylated by the insulin receptor binds specifically to various cellular proteins containing SH2 domains. Involved in control of cell proliferation, cell size, and body and organ growth throughout development. Also has a role in a signaling pathway controlling the physiological response required to endure periods of low nutrient conditions. Insulin/insulin-like growth factor (IGF) signaling pathway has a role in regulating aging and is necessary in the ovary for vitellogenic maturation. The chain is Insulin receptor substrate 1 from Drosophila sechellia (Fruit fly).